A 135-amino-acid polypeptide reads, in one-letter code: Endocuticle structural glycoprotein SgAbd-2 (135 aa).

Gln1 carries the pyrrolidone carboxylic acid modification. O-linked (HexNAc...) threonine glycosylation is found at Thr11 and Thr100. Residues 32 to 102 enclose the Chitin-binding type R&amp;R domain; sequence DGSYAYSYQT…AEGAHLPTPP (71 aa).

Component of the abdominal endocuticle. The polypeptide is Endocuticle structural glycoprotein SgAbd-2 (Schistocerca gregaria (Desert locust)).